Here is a 198-residue protein sequence, read N- to C-terminus: Nucleoid occlusion factor SlmA (198 aa).

Positions 10–70 (NRREEILQSL…SLIEFIEDSL (61 aa)) constitute an HTH tetR-type domain. Residues 33 to 52 (TTAKLAASVGVSEAALYRHF) constitute a DNA-binding region (H-T-H motif). The stretch at 117–144 (EQDRLQGRINQLFERIEAQLRQVLREKR) forms a coiled coil.

Belongs to the nucleoid occlusion factor SlmA family. Homodimer. Interacts with FtsZ.

The protein localises to the cytoplasm. Its subcellular location is the nucleoid. Functionally, required for nucleoid occlusion (NO) phenomenon, which prevents Z-ring formation and cell division over the nucleoid. Acts as a DNA-associated cell division inhibitor that binds simultaneously chromosomal DNA and FtsZ, and disrupts the assembly of FtsZ polymers. SlmA-DNA-binding sequences (SBS) are dispersed on non-Ter regions of the chromosome, preventing FtsZ polymerization at these regions. The protein is Nucleoid occlusion factor SlmA of Salmonella dublin (strain CT_02021853).